The sequence spans 665 residues: Transketolase 1 (665 aa).

His-26 contributes to the substrate binding site. Thiamine diphosphate contacts are provided by residues His-66 and 114-116; that span reads GPL. Position 155 (Asp-155) interacts with Mg(2+). Residues Gly-156 and Asn-185 each coordinate thiamine diphosphate. Residues Asn-185 and Ile-187 each contribute to the Mg(2+) site. His-261, Arg-358, and Ser-385 together coordinate substrate. Residue His-261 participates in thiamine diphosphate binding. Residue Glu-412 is the Proton donor of the active site. Phe-438 is a binding site for thiamine diphosphate. Residues His-462, Asp-470, and Arg-521 each coordinate substrate.

The protein belongs to the transketolase family. In terms of assembly, homodimer. It depends on Mg(2+) as a cofactor. Ca(2+) is required as a cofactor. Requires Mn(2+) as cofactor. Co(2+) serves as cofactor. The cofactor is thiamine diphosphate.

It catalyses the reaction D-sedoheptulose 7-phosphate + D-glyceraldehyde 3-phosphate = aldehydo-D-ribose 5-phosphate + D-xylulose 5-phosphate. Functionally, catalyzes the transfer of a two-carbon ketol group from a ketose donor to an aldose acceptor, via a covalent intermediate with the cofactor thiamine pyrophosphate. This Vibrio cholerae serotype O1 (strain ATCC 39315 / El Tor Inaba N16961) protein is Transketolase 1 (tkt1).